Here is a 160-residue protein sequence, read N- to C-terminus: MTKKKAHKPGSATIALNKRARHEYFIEEEFEAGLALQGWEVKSLRAGKANISDSYVLLRDGEAFLFGANITPMAVASTHVVCDPTRTRKLLLNQRELDSLYGRVNREGYTVVALSLYWKNAWCKVKIGVAKGKKQHDKRSDIKEREWQVDKARIMKNAHR.

This sequence belongs to the SmpB family.

It localises to the cytoplasm. In terms of biological role, required for rescue of stalled ribosomes mediated by trans-translation. Binds to transfer-messenger RNA (tmRNA), required for stable association of tmRNA with ribosomes. tmRNA and SmpB together mimic tRNA shape, replacing the anticodon stem-loop with SmpB. tmRNA is encoded by the ssrA gene; the 2 termini fold to resemble tRNA(Ala) and it encodes a 'tag peptide', a short internal open reading frame. During trans-translation Ala-aminoacylated tmRNA acts like a tRNA, entering the A-site of stalled ribosomes, displacing the stalled mRNA. The ribosome then switches to translate the ORF on the tmRNA; the nascent peptide is terminated with the 'tag peptide' encoded by the tmRNA and targeted for degradation. The ribosome is freed to recommence translation, which seems to be the essential function of trans-translation. This chain is SsrA-binding protein, found in Escherichia coli O139:H28 (strain E24377A / ETEC).